Here is a 91-residue protein sequence, read N- to C-terminus: Protein transport protein Sec61 subunit beta (91 aa).

The disordered stretch occupies residues 1-45; it reads MSTSAQVPGGPAAQMKRRNNAQRQEAKASQRPTSTRSVGAGGSSS. The Cytoplasmic segment spans residues 1-62; that stretch reads MSTSAQVPGG…DESQGLKVDP (62 aa). Over residues 30–45 the composition is skewed to polar residues; that stretch reads QRPTSTRSVGAGGSSS. The helical transmembrane segment at 63 to 83 threads the bilayer; it reads VVVMVLSLGFIFSVVALHILA.

The protein belongs to the SEC61-beta family. In terms of assembly, heterotrimeric complex composed of SEC61, SEB1 and SSS1.

It is found in the endoplasmic reticulum membrane. Functionally, necessary for protein translocation in the endoplasmic reticulum. The sequence is that of Protein transport protein Sec61 subunit beta (SBH1) from Yarrowia lipolytica (strain CLIB 122 / E 150) (Yeast).